The chain runs to 452 residues: Pup--protein ligase (452 aa).

E9 provides a ligand contact to Mg(2+). R53 is a binding site for ATP. Residue Y55 coordinates Mg(2+). The active-site Proton acceptor is D57. E63 is a Mg(2+) binding site. Residues T66 and W419 each contribute to the ATP site.

This sequence belongs to the Pup ligase/Pup deamidase family. Pup-conjugating enzyme subfamily.

The catalysed reaction is ATP + [prokaryotic ubiquitin-like protein]-L-glutamate + [protein]-L-lysine = ADP + phosphate + N(6)-([prokaryotic ubiquitin-like protein]-gamma-L-glutamyl)-[protein]-L-lysine.. The protein operates within protein degradation; proteasomal Pup-dependent pathway. It participates in protein modification; protein pupylation. Catalyzes the covalent attachment of the prokaryotic ubiquitin-like protein modifier Pup to the proteasomal substrate proteins, thereby targeting them for proteasomal degradation. This tagging system is termed pupylation. The ligation reaction involves the side-chain carboxylate of the C-terminal glutamate of Pup and the side-chain amino group of a substrate lysine. The chain is Pup--protein ligase from Rhodococcus erythropolis (strain PR4 / NBRC 100887).